The following is a 439-amino-acid chain: Histidine--tRNA ligase (439 aa).

The protein belongs to the class-II aminoacyl-tRNA synthetase family. Homodimer.

The protein resides in the cytoplasm. The enzyme catalyses tRNA(His) + L-histidine + ATP = L-histidyl-tRNA(His) + AMP + diphosphate + H(+). This Clostridium tetani (strain Massachusetts / E88) protein is Histidine--tRNA ligase.